The primary structure comprises 264 residues: THAP domain-containing protein 10 (264 aa).

A THAP-type zinc finger spans residues 1-90; the sequence is MPARCVAAHC…LVAGAVPTLH (90 aa). 2 disordered regions span residues 90–136 and 160–195; these read HRVP…PRAG and TQPH…KRPR. Residues 99-122 are compositionally biased toward basic and acidic residues; sequence GGEEGDQAGRPDTRGELQAARHSE. The segment covering 160–175 has biased composition (polar residues); the sequence is TQPHADNPSNTVTSVP.

This chain is THAP domain-containing protein 10 (THAP10), found in Pongo abelii (Sumatran orangutan).